A 358-amino-acid polypeptide reads, in one-letter code: PqqA peptide cyclase (358 aa).

The Radical SAM core domain occupies 4–219; the sequence is PSPPMSLLAE…VEAERAKGGL (216 aa). Positions 18, 22, and 25 each coordinate [4Fe-4S] cluster.

The protein belongs to the radical SAM superfamily. PqqE family. As to quaternary structure, interacts with PqqD. The interaction is necessary for activity of PqqE. [4Fe-4S] cluster is required as a cofactor.

It carries out the reaction [PQQ precursor protein] + S-adenosyl-L-methionine = E-Y cross-linked-[PQQ precursor protein] + 5'-deoxyadenosine + L-methionine + H(+). It participates in cofactor biosynthesis; pyrroloquinoline quinone biosynthesis. In terms of biological role, catalyzes the cross-linking of a glutamate residue and a tyrosine residue in the PqqA protein as part of the biosynthesis of pyrroloquinoline quinone (PQQ). The chain is PqqA peptide cyclase from Gluconobacter oxydans (strain 621H) (Gluconobacter suboxydans).